A 193-amino-acid polypeptide reads, in one-letter code: Dual-action ribosomal maturation protein DarP (193 aa).

Over residues 1-10 (MRGRDEDTGE) the composition is skewed to basic and acidic residues. 2 disordered regions span residues 1-20 (MRGR…SQQR) and 171-193 (QEQG…EDDE). Residues 181–193 (GLEDGESALEDDE) show a composition bias toward acidic residues.

Belongs to the DarP family.

The protein localises to the cytoplasm. Functionally, member of a network of 50S ribosomal subunit biogenesis factors which assembles along the 30S-50S interface, preventing incorrect 23S rRNA structures from forming. Promotes peptidyl transferase center (PTC) maturation. The chain is Dual-action ribosomal maturation protein DarP from Xanthomonas oryzae pv. oryzae (strain MAFF 311018).